The chain runs to 232 residues: Phosphoribosylaminoimidazole-succinocarboxamide synthase (232 aa).

This sequence belongs to the SAICAR synthetase family.

It catalyses the reaction 5-amino-1-(5-phospho-D-ribosyl)imidazole-4-carboxylate + L-aspartate + ATP = (2S)-2-[5-amino-1-(5-phospho-beta-D-ribosyl)imidazole-4-carboxamido]succinate + ADP + phosphate + 2 H(+). It participates in purine metabolism; IMP biosynthesis via de novo pathway; 5-amino-1-(5-phospho-D-ribosyl)imidazole-4-carboxamide from 5-amino-1-(5-phospho-D-ribosyl)imidazole-4-carboxylate: step 1/2. The chain is Phosphoribosylaminoimidazole-succinocarboxamide synthase from Finegoldia magna (strain ATCC 29328 / DSM 20472 / WAL 2508) (Peptostreptococcus magnus).